We begin with the raw amino-acid sequence, 249 residues long: FMN reductase (NADPH) (249 aa).

The protein belongs to the flavin oxidoreductase frp family. In terms of assembly, homodimer.

It catalyses the reaction FMNH2 + NADP(+) = FMN + NADPH + 2 H(+). Functionally, reduces FMNH(2) to FMN, with NADPH as reductant. It also reduces nitroaromatic compounds, quinones and azo dyes. This Bacillus subtilis (strain 168) protein is FMN reductase (NADPH) (nfrA1).